A 335-amino-acid chain; its full sequence is Beta-ketoacyl-[acyl-carrier-protein] synthase III (335 aa).

Catalysis depends on residues cysteine 117 and histidine 258. An ACP-binding region spans residues 259 to 263; that stretch reads QANQR. Asparagine 288 is an active-site residue.

This sequence belongs to the thiolase-like superfamily. FabH family. Homodimer.

Its subcellular location is the cytoplasm. It catalyses the reaction malonyl-[ACP] + acetyl-CoA + H(+) = 3-oxobutanoyl-[ACP] + CO2 + CoA. It functions in the pathway lipid metabolism; fatty acid biosynthesis. Its function is as follows. Catalyzes the condensation reaction of fatty acid synthesis by the addition to an acyl acceptor of two carbons from malonyl-ACP. Catalyzes the first condensation reaction which initiates fatty acid synthesis and may therefore play a role in governing the total rate of fatty acid production. Possesses both acetoacetyl-ACP synthase and acetyl transacylase activities. Its substrate specificity determines the biosynthesis of branched-chain and/or straight-chain of fatty acids. In Synechococcus elongatus (strain ATCC 33912 / PCC 7942 / FACHB-805) (Anacystis nidulans R2), this protein is Beta-ketoacyl-[acyl-carrier-protein] synthase III.